A 266-amino-acid polypeptide reads, in one-letter code: MQTDNTKSNTNKTAKQEWGSFAFVICIALLIRILIMEPFTVPTGSMKATILENDYIFSTKYSYGYSNYSLSFFDFIPLFKGRIFAREPDRGDIVVFRPPNDMSVRYIKRLIGLPGDKIQLIDDVIYINDKKIERTEVGTYISEEGIKYLKFKETLPNGRTYFSYKLAPIYGVIYNDRYGNTDVFYVPEGKYFFLGDNRDQSNDSRVNLGFVPFENFIAKAQFIWFSTKITWWDNDIGVINLVLKLKPWVESVRLNRIFRNLYNTDA.

Residues 1–20 are Cytoplasmic-facing; it reads MQTDNTKSNTNKTAKQEWGS. A helical transmembrane segment spans residues 21-41; that stretch reads FAFVICIALLIRILIMEPFTV. The Periplasmic portion of the chain corresponds to 42–266; it reads PTGSMKATIL…IFRNLYNTDA (225 aa). Active-site residues include Ser45 and Lys108.

The protein belongs to the peptidase S26 family.

Its subcellular location is the cell inner membrane. It catalyses the reaction Cleavage of hydrophobic, N-terminal signal or leader sequences from secreted and periplasmic proteins.. Complements E.coli mutants temperature-sensitive for LepB function. This Rickettsia rickettsii (strain Sheila Smith) protein is Signal peptidase I (lepB).